Here is a 507-residue protein sequence, read N- to C-terminus: Germ cell nuclear acidic protein (507 aa).

Residues 1–51 (MDSGSSSSSSSSGSSSGSCSTSGSGSTSGSSTTSSSSSSSSSSSSSSSSSS) show a composition bias toward low complexity. A disordered region spans residues 1 to 507 (MDSGSSSSSS…GRGRGAKAGK (507 aa)). 4 short sequence motifs (SUMO interaction motif 1 (SIM)) span residues 12–15 (SGSS), 66–69 (CVVI), 86–89 (VCEI), and 108–111 (LIVI). 3 stretches are compositionally biased toward basic and acidic residues: residues 122-141 (KNTKQKSDEPQMSVLEKEGV), 179-354 (SEAK…KGEM), and 431-449 (PQDRADPQDLADPQDRGDS). The span at 480-507 (GRGRGRGRGRGRGRGRGRGRGRGAKAGK) shows a compositional bias: basic residues.

It belongs to the serine-aspartate repeat-containing protein (SDr) family. Interacts (via SIM domains) with SUMO2; this interaction allows the GCNA recruitment to DPCs sites. Interacts with TOP2A; this interaction allows the resolution of topoisomerase II (TOP2A) DNA-protein cross-links. In terms of tissue distribution, germ-cells specific.

The protein localises to the chromosome. It localises to the nucleus. It is found in the PML body. May play a role in DNA-protein cross-links (DPCs) clearance through a SUMO-dependent recruitment to sites of DPCs, ensuring the genomic stability by protecting germ cells and early embryos from various sources of damage. Can resolve the topoisomerase II (TOP2A) DPCs. The sequence is that of Germ cell nuclear acidic protein from Mus musculus (Mouse).